We begin with the raw amino-acid sequence, 451 residues long: MQRHAIILAAGKGTRMKSKKYKVLHEVAGKPMVEHVLNNVKQAGVDQIVTIIGHGAESVKDTLGNQSLYSFQDKQLGTAHAVKMAHEHLADKEGTTLVVCGDTPLITYQTLQSLIEHHESTQSHVTVLSASTINPYGYGRIIRNHNGILERIVEEKDANDSERAIKEISSGIFAFNNRVLFEKLEQVKNDNAQGEYYLPDVLSLILKDGGKAEVYCTEDFDEIIGVNDRLMLSEAEKALQQRINRYHMENGVTIIDPSSTFIGTDVKIGIDTTIEPGVRIGGHTTIEEDVWIGQYSEINNSTIHSNANIKQSVINDSIVGENTTVGPFAQLRPGSNLGSEVKVGNFVEVKKADIKDGAKVSHLSYIGDAEIGERTNIGCGSITVNYDGANKFKTIVGKDAFIGCNTNLIAPVTVGNHTLIAAGSTITDNIPEDSLALARARQVNKEGYLKK.

The interval 1 to 229 (MQRHAIILAA…FDEIIGVNDR (229 aa)) is pyrophosphorylase. UDP-N-acetyl-alpha-D-glucosamine-binding positions include 8–11 (LAAG), Lys22, Gln72, and 77–78 (GT). Mg(2+) is bound at residue Asp102. 3 residues coordinate UDP-N-acetyl-alpha-D-glucosamine: Gly139, Glu154, and Asn227. Residue Asn227 coordinates Mg(2+). Positions 230–250 (LMLSEAEKALQQRINRYHMEN) are linker. The segment at 251-451 (GVTIIDPSST…QVNKEGYLKK (201 aa)) is N-acetyltransferase. The UDP-N-acetyl-alpha-D-glucosamine site is built by Arg332 and Lys350. Catalysis depends on His362, which acts as the Proton acceptor. UDP-N-acetyl-alpha-D-glucosamine is bound by residues Tyr365 and Asn376. Acetyl-CoA-binding positions include 385 to 386 (NY), Ala422, and Arg439.

The protein in the N-terminal section; belongs to the N-acetylglucosamine-1-phosphate uridyltransferase family. It in the C-terminal section; belongs to the transferase hexapeptide repeat family. In terms of assembly, homotrimer. Mg(2+) is required as a cofactor.

Its subcellular location is the cytoplasm. It carries out the reaction alpha-D-glucosamine 1-phosphate + acetyl-CoA = N-acetyl-alpha-D-glucosamine 1-phosphate + CoA + H(+). It catalyses the reaction N-acetyl-alpha-D-glucosamine 1-phosphate + UTP + H(+) = UDP-N-acetyl-alpha-D-glucosamine + diphosphate. Its pathway is nucleotide-sugar biosynthesis; UDP-N-acetyl-alpha-D-glucosamine biosynthesis; N-acetyl-alpha-D-glucosamine 1-phosphate from alpha-D-glucosamine 6-phosphate (route II): step 2/2. The protein operates within nucleotide-sugar biosynthesis; UDP-N-acetyl-alpha-D-glucosamine biosynthesis; UDP-N-acetyl-alpha-D-glucosamine from N-acetyl-alpha-D-glucosamine 1-phosphate: step 1/1. It functions in the pathway bacterial outer membrane biogenesis; LPS lipid A biosynthesis. Catalyzes the last two sequential reactions in the de novo biosynthetic pathway for UDP-N-acetylglucosamine (UDP-GlcNAc). The C-terminal domain catalyzes the transfer of acetyl group from acetyl coenzyme A to glucosamine-1-phosphate (GlcN-1-P) to produce N-acetylglucosamine-1-phosphate (GlcNAc-1-P), which is converted into UDP-GlcNAc by the transfer of uridine 5-monophosphate (from uridine 5-triphosphate), a reaction catalyzed by the N-terminal domain. This is Bifunctional protein GlmU from Staphylococcus epidermidis (strain ATCC 35984 / DSM 28319 / BCRC 17069 / CCUG 31568 / BM 3577 / RP62A).